Here is a 457-residue protein sequence, read N- to C-terminus: Bifunctional protein GlmU (457 aa).

The pyrophosphorylase stretch occupies residues 1–230 (MSKRYAVVLA…FEESLGVNDR (230 aa)). UDP-N-acetyl-alpha-D-glucosamine is bound by residues 9–12 (LAAG), K23, Q73, and 78–79 (GT). Mg(2+) is bound at residue D103. Residues G140, E155, N170, and N228 each coordinate UDP-N-acetyl-alpha-D-glucosamine. Residue N228 coordinates Mg(2+). The tract at residues 231-251 (IALAEASRLMQRRINENHMRN) is linker. Residues 252–457 (GVTLVNPENT…GYAKHLNHGK (206 aa)) are N-acetyltransferase. 2 residues coordinate UDP-N-acetyl-alpha-D-glucosamine: R333 and K351. The active-site Proton acceptor is the H363. UDP-N-acetyl-alpha-D-glucosamine-binding residues include Y366 and N377. Residues 386 to 387 (NY), A423, and R440 each bind acetyl-CoA.

It in the N-terminal section; belongs to the N-acetylglucosamine-1-phosphate uridyltransferase family. This sequence in the C-terminal section; belongs to the transferase hexapeptide repeat family. Homotrimer. Mg(2+) serves as cofactor.

The protein localises to the cytoplasm. It catalyses the reaction alpha-D-glucosamine 1-phosphate + acetyl-CoA = N-acetyl-alpha-D-glucosamine 1-phosphate + CoA + H(+). It carries out the reaction N-acetyl-alpha-D-glucosamine 1-phosphate + UTP + H(+) = UDP-N-acetyl-alpha-D-glucosamine + diphosphate. The protein operates within nucleotide-sugar biosynthesis; UDP-N-acetyl-alpha-D-glucosamine biosynthesis; N-acetyl-alpha-D-glucosamine 1-phosphate from alpha-D-glucosamine 6-phosphate (route II): step 2/2. Its pathway is nucleotide-sugar biosynthesis; UDP-N-acetyl-alpha-D-glucosamine biosynthesis; UDP-N-acetyl-alpha-D-glucosamine from N-acetyl-alpha-D-glucosamine 1-phosphate: step 1/1. It participates in bacterial outer membrane biogenesis; LPS lipid A biosynthesis. Functionally, catalyzes the last two sequential reactions in the de novo biosynthetic pathway for UDP-N-acetylglucosamine (UDP-GlcNAc). The C-terminal domain catalyzes the transfer of acetyl group from acetyl coenzyme A to glucosamine-1-phosphate (GlcN-1-P) to produce N-acetylglucosamine-1-phosphate (GlcNAc-1-P), which is converted into UDP-GlcNAc by the transfer of uridine 5-monophosphate (from uridine 5-triphosphate), a reaction catalyzed by the N-terminal domain. The protein is Bifunctional protein GlmU of Listeria monocytogenes serotype 4b (strain CLIP80459).